The primary structure comprises 914 residues: MGAEKRINDEEAQPLTGRDRSRDSIDSTSTASISLALIDQANRSTHAGRTTPPRNFGNGEKYRDNDDDNPEGGLPPPSGAQRTPKKVSIIFWLVAALCVGGWLVAFFVFMGSPKKDSDKEVVVSGAENSTVPGVVSTGGKKVDLDGVLTGFWSPRSHEISWIPGPDGEDGLLLEQDGDENAGYLRVENIRNQKSTNKKDDAVVLMKRETFKVGARRVRPSKVWPSPDLKTVLVMSDRLKNWRHSYTGNYWLFNVETQTGEPLDPGSPDGRIQLASWSPKSDSVVFTRDNNMFIRNLSSKDVKPITTDGGVNLFYGIPDWVYEEEVFSGNSATWWDNDGKFVAFLRTNESRVPEYPVQYFIPTVGRVAHAGEEHYPNTRKIKYPKAGAPNPTVNIQFFDVEKGEVFSIEMEDDLPDHDRLIIEVIWASNGKVLVRETNRESDRLSMVLVDAKDRTAKVIRSQDFSKLDGGWIEPSQSTYFIPADPGNGRPHDGYIETVPFEGFNHLAYFTPLDNPSPVFLTSGNWEVTDAPSAVDLKRGLVYFVAAKEQPTERHVYTVRLDGSDLQPIVNTKAPAYYTISLSTGAGYALLKYEGPEIPWQKVISTPANEERFEETIENNTELAGRAKDYALPSLYYQTITIDGYTLPVVERRPPNFNPDKKYPVLFHLYGGPGSQTVSKRFKVDFQSYVASNLGYIVVTVDGRGTGFIGRKARCVVRDNLGHYEAIDQIETAKAWGKRPYVDATRMAIWGWSYGGFMTLKTLERDAGQTFQYGMAVAPVTDWQFYDSIYTERYMHTPQNNPAGYANTAVSNVTALGQTVRFMVIHGTGDDNVHYQNTLTLLDKLDVDNVGNFDVHVYPDSDHGIYFHNAYKMLHERLSDWLVNAFNGEWVKIRNPVPNKSLMRRARSLLKRMSNA.

The tract at residues 1–82 (MGAEKRINDE…GLPPPSGAQR (82 aa)) is disordered. The Cytoplasmic portion of the chain corresponds to 1 to 88 (MGAEKRINDE…GAQRTPKKVS (88 aa)). Residues 26–38 (DSTSTASISLALI) show a composition bias toward low complexity. A helical; Signal-anchor for type II membrane protein transmembrane segment spans residues 89–109 (IIFWLVAALCVGGWLVAFFVF). The Vacuolar portion of the chain corresponds to 110–914 (MGSPKKDSDK…RSLLKRMSNA (805 aa)). Asn128, Asn295, Asn347, and Asn617 each carry an N-linked (GlcNAc...) asparagine glycan. Ser751 serves as the catalytic Charge relay system. N-linked (GlcNAc...) asparagine glycosylation occurs at Asn810. Active-site charge relay system residues include Asp828 and His861. An N-linked (GlcNAc...) asparagine glycan is attached at Asn897.

It belongs to the peptidase S9B family.

The protein resides in the vacuole membrane. The catalysed reaction is Release of an N-terminal dipeptide, Xaa-Yaa-|-Zaa-, from a polypeptide, preferentially when Yaa is Pro, provided Zaa is neither Pro nor hydroxyproline.. Type IV dipeptidyl-peptidase which removes N-terminal dipeptides sequentially from polypeptides having unsubstituted N-termini provided that the penultimate residue is proline. The polypeptide is Probable dipeptidyl-aminopeptidase B (DAPB) (Uncinocarpus reesii (strain UAMH 1704)).